Here is a 209-residue protein sequence, read N- to C-terminus: Bacteriorhodopsin (209 aa).

Residues 1-17 (LWLGTAGMFLGMLYFIA) traverse the membrane as a helical segment. At 18 to 31 (RGWGETDGRRQKFY) the chain is on the cytoplasmic side. A helical membrane pass occupies residues 32–50 (IATILITAIAFVNYLAMAL). At 51–66 (GFGLTFIEFGGEQHPI) the chain is on the extracellular side. Residues 67 to 84 (YWARYTDWLFTTPLLLYD) form a helical membrane-spanning segment. Residues 85–95 (LGLLAGADRNT) lie on the Cytoplasmic side of the membrane. A helical transmembrane segment spans residues 96-115 (IYSLVSLDVLMIGTGVVATL). The Extracellular portion of the chain corresponds to 116 to 128 (SAGSGVLSAGAER). A helical transmembrane segment spans residues 129–148 (LVWWGISTAFLLVLLYFLFS). Residues 149-166 (SLSGRVANLPSDTRSTFK) are Cytoplasmic-facing. A helical transmembrane segment spans residues 167–185 (TLRNLVTVVWLVYPVWWLV). Residues 186-197 (GSEGLGLVGIGI) lie on the Extracellular side of the membrane. The chain crosses the membrane as a helical span at residues 198-209 (ETAGFMVIDLVA).

The protein belongs to the archaeal/bacterial/fungal opsin family.

The protein localises to the cell membrane. Its function is as follows. Light-driven proton pump. The protein is Bacteriorhodopsin (bop) of Halobacterium halobium (strain shark).